The following is an 84-amino-acid chain: Putative defensin-like protein 63 (84 aa).

A signal peptide spans 1–21; the sequence is MDIRKTYVIIFFVGILTISFS. 4 cysteine pairs are disulfide-bonded: Cys-40/Cys-81, Cys-44/Cys-67, Cys-53/Cys-79, and Cys-57/Cys-80.

The protein belongs to the DEFL family.

It localises to the secreted. The chain is Putative defensin-like protein 63 from Arabidopsis thaliana (Mouse-ear cress).